We begin with the raw amino-acid sequence, 240 residues long: Ribitol-5-phosphate cytidylyltransferase (240 aa).

CTP-binding positions include 8-11 and 81-87; these read FAGG and GETGQMS.

The protein belongs to the IspD/TarI cytidylyltransferase family. TarI subfamily.

It catalyses the reaction D-ribitol 5-phosphate + CTP + H(+) = CDP-L-ribitol + diphosphate. Its pathway is cell wall biogenesis; poly(ribitol phosphate) teichoic acid biosynthesis. Catalyzes the transfer of the cytidylyl group of CTP to D-ribitol 5-phosphate. The polypeptide is Ribitol-5-phosphate cytidylyltransferase (Streptococcus agalactiae serotype V (strain ATCC BAA-611 / 2603 V/R)).